A 258-amino-acid polypeptide reads, in one-letter code: Imidazole glycerol phosphate synthase subunit HisF (258 aa).

Catalysis depends on residues Asp11 and Asp130.

It belongs to the HisA/HisF family. Heterodimer of HisH and HisF.

Its subcellular location is the cytoplasm. It carries out the reaction 5-[(5-phospho-1-deoxy-D-ribulos-1-ylimino)methylamino]-1-(5-phospho-beta-D-ribosyl)imidazole-4-carboxamide + L-glutamine = D-erythro-1-(imidazol-4-yl)glycerol 3-phosphate + 5-amino-1-(5-phospho-beta-D-ribosyl)imidazole-4-carboxamide + L-glutamate + H(+). It functions in the pathway amino-acid biosynthesis; L-histidine biosynthesis; L-histidine from 5-phospho-alpha-D-ribose 1-diphosphate: step 5/9. In terms of biological role, IGPS catalyzes the conversion of PRFAR and glutamine to IGP, AICAR and glutamate. The HisF subunit catalyzes the cyclization activity that produces IGP and AICAR from PRFAR using the ammonia provided by the HisH subunit. This is Imidazole glycerol phosphate synthase subunit HisF from Roseiflexus sp. (strain RS-1).